Consider the following 354-residue polypeptide: Uroporphyrinogen decarboxylase (354 aa).

Substrate is bound by residues 27–31 (RQAGR), Asp-77, Tyr-154, Ser-209, and His-327.

It belongs to the uroporphyrinogen decarboxylase family. As to quaternary structure, homodimer.

The protein localises to the cytoplasm. The catalysed reaction is uroporphyrinogen III + 4 H(+) = coproporphyrinogen III + 4 CO2. Its pathway is porphyrin-containing compound metabolism; protoporphyrin-IX biosynthesis; coproporphyrinogen-III from 5-aminolevulinate: step 4/4. Functionally, catalyzes the decarboxylation of four acetate groups of uroporphyrinogen-III to yield coproporphyrinogen-III. The polypeptide is Uroporphyrinogen decarboxylase (Shewanella putrefaciens (strain CN-32 / ATCC BAA-453)).